A 323-amino-acid polypeptide reads, in one-letter code: Calcium homeostasis modulator protein 2 (323 aa).

Residues 1-21 lie on the Cytoplasmic side of the membrane; sequence MAALIAENFRFLSLFFKSKDV. Positions 14 to 39 are central pore; that stretch reads LFFKSKDVMIFNGLVALGTVGSQELF. Residues 22–43 form a helical membrane-spanning segment; it reads MIFNGLVALGTVGSQELFSVVA. Residues 44–52 are Extracellular-facing; the sequence is FHCPCSPAR. 2 cysteine pairs are disulfide-bonded: C46-C130 and C48-C162. The helical transmembrane segment at 53–76 threads the bilayer; sequence NYLYGLAAIGVPALVLFIIGIILN. Over 77 to 101 the chain is Cytoplasmic; sequence NHTWNLVAECQHRRTKNCSAAPTFL. A helical transmembrane segment spans residues 102 to 132; sequence LLSSILGRAAVAPVTWSVISLLRGEAYVCAL. At 133–179 the chain is on the extracellular side; it reads SEFVDPSSLTAREEHFPSAHATEILARFPCKENPDNLSDFREEVSRR. Positions 145–152 are hemichannel docking; that stretch reads EEHFPSAH. The chain crosses the membrane as a helical span at residues 180-206; the sequence is LRYESQLFGWLLIGVVAILVFLTKCLK. Residues 207–323 lie on the Cytoplasmic side of the membrane; sequence HYCSPLSYRQ…DNVEMALLPS (117 aa). Positions 214–251 are intersubunit interaction; that stretch reads YRQEAYWAQYRANEDQLFQRTAEVHSRVLAANNVRRFF.

It belongs to the CALHM family. Homo-undecamer. Two undecameric hemichannels can assemble in a head-to-head manner to form a gap junction. Placenta.

It localises to the cell membrane. It carries out the reaction ATP(in) = ATP(out). Its activity is regulated as follows. Inhibited by Ca(2+) and ruthenium red in a voltage-dependent way. In terms of biological role, pore-forming subunit of Ca(2+) homeostasis modulator channels. Mediates ATP release from astrocytes and ATP-induced Ca(2+) influx in microglia thus regulating neuronal ATP and Ca(2+) homeostasis, synaptic transmission and neuroinflammatory response. May form intercellular gap junctions. The gating mechanism remains unknown. This is Calcium homeostasis modulator protein 2 from Homo sapiens (Human).